Reading from the N-terminus, the 140-residue chain is Probable NADH dehydrogenase [ubiquinone] iron-sulfur protein 6, mitochondrial (140 aa).

It belongs to the complex I NDUFS6 subunit family. In terms of assembly, complex I is composed of 45 different subunits. This is a component of the iron-sulfur (IP) fragment of the enzyme.

The protein resides in the mitochondrion inner membrane. Accessory subunit of the mitochondrial membrane respiratory chain NADH dehydrogenase (Complex I), that is believed not to be involved in catalysis. Complex I functions in the transfer of electrons from NADH to the respiratory chain. The immediate electron acceptor for the enzyme is believed to be ubiquinone. This is Probable NADH dehydrogenase [ubiquinone] iron-sulfur protein 6, mitochondrial (nduf-6) from Caenorhabditis elegans.